A 378-amino-acid chain; its full sequence is Carbamoyl phosphate synthase small chain (378 aa).

A CPSase region spans residues 1 to 189 (MTKPAILALA…DSHPEIPAGE (189 aa)). Ser47, Gly241, and Gly243 together coordinate L-glutamine. One can recognise a Glutamine amidotransferase type-1 domain in the interval 193–378 (HVVAYDYGVK…RFISAMAERR (186 aa)). Cys269 serves as the catalytic Nucleophile. Leu270, Gln273, Asn311, Gly313, and Phe314 together coordinate L-glutamine. Residues His353 and Glu355 contribute to the active site.

The protein belongs to the CarA family. Composed of two chains; the small (or glutamine) chain promotes the hydrolysis of glutamine to ammonia, which is used by the large (or ammonia) chain to synthesize carbamoyl phosphate. Tetramer of heterodimers (alpha,beta)4.

It catalyses the reaction hydrogencarbonate + L-glutamine + 2 ATP + H2O = carbamoyl phosphate + L-glutamate + 2 ADP + phosphate + 2 H(+). The enzyme catalyses L-glutamine + H2O = L-glutamate + NH4(+). It participates in amino-acid biosynthesis; L-arginine biosynthesis; carbamoyl phosphate from bicarbonate: step 1/1. Its pathway is pyrimidine metabolism; UMP biosynthesis via de novo pathway; (S)-dihydroorotate from bicarbonate: step 1/3. In terms of biological role, small subunit of the glutamine-dependent carbamoyl phosphate synthetase (CPSase). CPSase catalyzes the formation of carbamoyl phosphate from the ammonia moiety of glutamine, carbonate, and phosphate donated by ATP, constituting the first step of 2 biosynthetic pathways, one leading to arginine and/or urea and the other to pyrimidine nucleotides. The small subunit (glutamine amidotransferase) binds and cleaves glutamine to supply the large subunit with the substrate ammonia. The polypeptide is Carbamoyl phosphate synthase small chain (Pseudomonas aeruginosa (strain ATCC 15692 / DSM 22644 / CIP 104116 / JCM 14847 / LMG 12228 / 1C / PRS 101 / PAO1)).